The chain runs to 561 residues: uncharacterized protein (561 aa).

The next 2 membrane-spanning stretches (helical) occupy residues 29–49 and 80–100; these read FIFN…KKII and FLFH…ASII.

The protein localises to the cell membrane. This is an uncharacterized protein from Mycoplasma genitalium (strain ATCC 33530 / DSM 19775 / NCTC 10195 / G37) (Mycoplasmoides genitalium).